The chain runs to 296 residues: MPELPEVEVVRRGLDAHVTGKAITAVRVHHPRAVRRHEAGPADLTARLLGMRITGTGRRGKYLWLTLDDGDEPLARRAESSVALVVHLGMSGQMLLGPIPKEDHLRIAALFDDGTALSFVDQRTFGGWLLADLVTVDGTDVPVPVAHVARDPLDPRFDRDAVVKVLRGKHSEIKRQLLDQTVVSGIGNIYADEALWRAKVNGARLAESLTKPKLAEILDHAADVMRDALGQGGTSFDSLYVNVNGESGYFDRSLDAYGREGEPCRRCGAIMRRDKFMNRSSFYCPRCQPRPRVRRA.

Pro-2 functions as the Schiff-base intermediate with DNA in the catalytic mechanism. Catalysis depends on Glu-3, which acts as the Proton donor. Residue Lys-61 is the Proton donor; for beta-elimination activity of the active site. Residues His-104, Arg-123, and Lys-169 each contribute to the DNA site. The segment at 255-289 (DAYGREGEPCRRCGAIMRRDKFMNRSSFYCPRCQP) adopts an FPG-type zinc-finger fold. Arg-279 (proton donor; for delta-elimination activity) is an active-site residue.

It belongs to the FPG family. As to quaternary structure, monomer. Zn(2+) serves as cofactor.

The catalysed reaction is Hydrolysis of DNA containing ring-opened 7-methylguanine residues, releasing 2,6-diamino-4-hydroxy-5-(N-methyl)formamidopyrimidine.. The enzyme catalyses 2'-deoxyribonucleotide-(2'-deoxyribose 5'-phosphate)-2'-deoxyribonucleotide-DNA = a 3'-end 2'-deoxyribonucleotide-(2,3-dehydro-2,3-deoxyribose 5'-phosphate)-DNA + a 5'-end 5'-phospho-2'-deoxyribonucleoside-DNA + H(+). In terms of biological role, involved in base excision repair of DNA damaged by oxidation or by mutagenic agents. Acts as a DNA glycosylase that recognizes and removes damaged bases. Has a preference for oxidized purines, such as 7,8-dihydro-8-oxoguanine (8-oxoG). Has AP (apurinic/apyrimidinic) lyase activity and introduces nicks in the DNA strand. Cleaves the DNA backbone by beta-delta elimination to generate a single-strand break at the site of the removed base with both 3'- and 5'-phosphates. This is Formamidopyrimidine-DNA glycosylase from Mycobacterium sp. (strain KMS).